A 215-amino-acid polypeptide reads, in one-letter code: Small ribosomal subunit protein uS7 (215 aa).

Belongs to the universal ribosomal protein uS7 family. Part of the 30S ribosomal subunit.

Functionally, one of the primary rRNA binding proteins, it binds directly to 16S rRNA where it nucleates assembly of the head domain of the 30S subunit. Is located at the subunit interface close to the decoding center. The sequence is that of Small ribosomal subunit protein uS7 from Thermococcus onnurineus (strain NA1).